Reading from the N-terminus, the 197-residue chain is Protein GrpE (197 aa).

The segment covering 1–27 (MSNKEQHIEKEEQLQEEKHEEQQKTEE) has biased composition (basic and acidic residues). The tract at residues 1-34 (MSNKEQHIEKEEQLQEEKHEEQQKTEETEVEAVN) is disordered.

Belongs to the GrpE family. Homodimer.

It localises to the cytoplasm. Functionally, participates actively in the response to hyperosmotic and heat shock by preventing the aggregation of stress-denatured proteins, in association with DnaK and GrpE. It is the nucleotide exchange factor for DnaK and may function as a thermosensor. Unfolded proteins bind initially to DnaJ; upon interaction with the DnaJ-bound protein, DnaK hydrolyzes its bound ATP, resulting in the formation of a stable complex. GrpE releases ADP from DnaK; ATP binding to DnaK triggers the release of the substrate protein, thus completing the reaction cycle. Several rounds of ATP-dependent interactions between DnaJ, DnaK and GrpE are required for fully efficient folding. The polypeptide is Protein GrpE (Pasteurella multocida (strain Pm70)).